We begin with the raw amino-acid sequence, 214 residues long: Probable transaldolase (214 aa).

Catalysis depends on lysine 83, which acts as the Schiff-base intermediate with substrate.

This sequence belongs to the transaldolase family. Type 3B subfamily.

Its subcellular location is the cytoplasm. It carries out the reaction D-sedoheptulose 7-phosphate + D-glyceraldehyde 3-phosphate = D-erythrose 4-phosphate + beta-D-fructose 6-phosphate. The protein operates within carbohydrate degradation; pentose phosphate pathway; D-glyceraldehyde 3-phosphate and beta-D-fructose 6-phosphate from D-ribose 5-phosphate and D-xylulose 5-phosphate (non-oxidative stage): step 2/3. Its function is as follows. Transaldolase is important for the balance of metabolites in the pentose-phosphate pathway. This Streptococcus equi subsp. zooepidemicus (strain H70) protein is Probable transaldolase.